Consider the following 206-residue polypeptide: MARYIGPKCKLSRREGTDLFLKSGVRALESKCNIEAAPGIHGQRRGRQSDYGTQLREKQKVRRIYGVLERQFRGYYQAAASKKGATGENLLQLLECRLDNVVYRMGFGSTRSESRQLVSHKAISVNGKTVNIPSYQVRPGDVVAVREKSLAQLRIVQALELCAQRGRVEWVDVDAAKKSGVFKNVPARSDLSADINENLIVELYSK.

Residues 96–160 (CRLDNVVYRM…AQLRIVQALE (65 aa)) enclose the S4 RNA-binding domain.

This sequence belongs to the universal ribosomal protein uS4 family. As to quaternary structure, part of the 30S ribosomal subunit. Contacts protein S5. The interaction surface between S4 and S5 is involved in control of translational fidelity.

Its function is as follows. One of the primary rRNA binding proteins, it binds directly to 16S rRNA where it nucleates assembly of the body of the 30S subunit. With S5 and S12 plays an important role in translational accuracy. The polypeptide is Small ribosomal subunit protein uS4 (Pseudomonas putida (strain GB-1)).